The chain runs to 78 residues: Small ribosomal subunit protein bS18 (78 aa).

The protein belongs to the bacterial ribosomal protein bS18 family. As to quaternary structure, part of the 30S ribosomal subunit. Forms a tight heterodimer with protein bS6.

In terms of biological role, binds as a heterodimer with protein bS6 to the central domain of the 16S rRNA, where it helps stabilize the platform of the 30S subunit. The sequence is that of Small ribosomal subunit protein bS18 from Rhodospirillum rubrum (strain ATCC 11170 / ATH 1.1.1 / DSM 467 / LMG 4362 / NCIMB 8255 / S1).